The following is a 95-amino-acid chain: Large ribosomal subunit protein bL27 (95 aa).

The propeptide occupies 1–9 (MLNMNLQFF).

It belongs to the bacterial ribosomal protein bL27 family. The N-terminus is cleaved by ribosomal processing cysteine protease Prp.

The protein is Large ribosomal subunit protein bL27 of Agathobacter rectalis (strain ATCC 33656 / DSM 3377 / JCM 17463 / KCTC 5835 / VPI 0990) (Eubacterium rectale).